A 66-amino-acid chain; its full sequence is Large ribosomal subunit protein uL29 (66 aa).

Belongs to the universal ribosomal protein uL29 family.

The sequence is that of Large ribosomal subunit protein uL29 from Thermosipho melanesiensis (strain DSM 12029 / CIP 104789 / BI429).